A 332-amino-acid chain; its full sequence is Ribosomal RNA small subunit methyltransferase H (332 aa).

S-adenosyl-L-methionine is bound by residues 39 to 41, aspartate 56, phenylalanine 83, aspartate 100, and glutamine 107; that span reads GGY.

This sequence belongs to the methyltransferase superfamily. RsmH family.

The protein localises to the cytoplasm. It catalyses the reaction cytidine(1402) in 16S rRNA + S-adenosyl-L-methionine = N(4)-methylcytidine(1402) in 16S rRNA + S-adenosyl-L-homocysteine + H(+). In terms of biological role, specifically methylates the N4 position of cytidine in position 1402 (C1402) of 16S rRNA. The chain is Ribosomal RNA small subunit methyltransferase H from Bartonella grahamii (strain as4aup).